The following is a 220-amino-acid chain: Inner kinetochore subunit fta3 (220 aa).

The protein belongs to the CENP-H/MCM16 family. In terms of assembly, component of the inner kinetochore constitutive centromere-associated network (CCAN) (also known as central kinetochore Sim4 complex in fission yeast), which is composed of at least cnl2, cnp3, cnp20, fta1, fta2, fta3, fta4, fta6, fta7, mal2, mhf1, mhf2, mis6, mis15, mis17, sim4 and wip1.

It is found in the nucleus. It localises to the chromosome. Its subcellular location is the centromere. The protein localises to the kinetochore. Component of the kinetochore, a multiprotein complex that assembles on centromeric DNA and attaches chromosomes to spindle microtubules, mediating chromosome segregation and sister chromatid segregation during meiosis and mitosis. Component of the inner kinetochore constitutive centromere-associated network (CCAN), which serves as a structural platform for outer kinetochore assembly. Fta2, fta3 and fta4 associate with the central core (cnt) and inner repeat (inr) region of the centromere. This Schizosaccharomyces pombe (strain 972 / ATCC 24843) (Fission yeast) protein is Inner kinetochore subunit fta3 (fta3).